Here is a 147-residue protein sequence, read N- to C-terminus: Transthyretin (147 aa).

Residues 1–20 (MASLRLFLLCLAGLIFASEA) form the signal peptide. Cys30 is subject to Sulfocysteine. L-thyroxine is bound at residue Lys35. A 4-carboxyglutamate modification is found at Glu62. Ser72 is subject to Phosphoserine. Glu74 contributes to the L-thyroxine binding site. The N-linked (GlcNAc...) asparagine glycan is linked to Asn118. Ser137 contributes to the L-thyroxine binding site.

Belongs to the transthyretin family. In terms of assembly, homotetramer. Dimer of dimers. In the homotetramer, subunits assemble around a central channel that can accommodate two ligand molecules. Interacts with RBP4. Sulfonation of the reactive cysteine Cys-30 enhances the stability of the native conformation of TTR, avoiding misassembly of the protein leading to amyloid formation. In terms of tissue distribution, detected in serum and cerebrospinal fluid (at protein level). Highly expressed in the choroid plexus. Detected at lower levels in the liver.

It localises to the secreted. Functionally, thyroid hormone-binding protein. Probably transports thyroxine from the bloodstream to the brain. The chain is Transthyretin (Ttr) from Rattus norvegicus (Rat).